The primary structure comprises 717 residues: Proline-rich receptor-like protein kinase PERK2 (717 aa).

The segment covering 1 to 197 (MSSAPPPGGT…GSLSPPPPAS (197 aa)) has biased composition (pro residues). The interval 1 to 221 (MSSAPPPGGT…GSSPPAQSSK (221 aa)) is disordered. Residues 1–228 (MSSAPPPGGT…SSKELSKGAM (228 aa)) lie on the Extracellular side of the membrane. Positions 198-220 (PSGGRSPSTPSTTPGSSPPAQSS) are enriched in low complexity. The helical transmembrane segment at 229-249 (VGIAIGGGFVLLVALALIFFL) threads the bilayer. The Cytoplasmic segment spans residues 250–717 (CKKKRRRDNE…NIKRPGQGYG (468 aa)). A disordered region spans residues 258 to 323 (NEAPPAPIDG…YDSNYSDQSV (66 aa)). The segment covering 289–303 (VPPPKSPSSAPPRPP) has biased composition (pro residues). The span at 307 to 322 (SSGSSGDYDSNYSDQS) shows a compositional bias: low complexity. The Protein kinase domain maps to 354-631 (FSEANLLGQG…QVARVLEGNI (278 aa)). ATP contacts are provided by residues 360-368 (LGQGGFGYV) and lysine 382. Residue aspartate 478 is the Proton acceptor of the active site. Polar residues-rich tracts occupy residues 632–644 (SPSD…TPGH) and 692–705 (SWSS…QGKA). Disordered regions lie at residues 632–665 (SPSD…DNEG) and 690–717 (YPSW…QGYG).

Belongs to the protein kinase superfamily. Ser/Thr protein kinase family. As to expression, mostly expressed in inflorescence bolt, flower buds and siliques, and, to a lower extent, in roots, seedlings and leaves.

It is found in the cell membrane. It catalyses the reaction L-seryl-[protein] + ATP = O-phospho-L-seryl-[protein] + ADP + H(+). It carries out the reaction L-threonyl-[protein] + ATP = O-phospho-L-threonyl-[protein] + ADP + H(+). The sequence is that of Proline-rich receptor-like protein kinase PERK2 (PERK2) from Arabidopsis thaliana (Mouse-ear cress).